Here is a 280-residue protein sequence, read N- to C-terminus: Large ribosomal subunit protein uL2 (280 aa).

The disordered stretch occupies residues 229–280 (DHPHGGGEGKAPIGHPSPLTPWGKPTLGYKTRKKRKPSDRFIIQRANDKKEK).

It belongs to the universal ribosomal protein uL2 family. In terms of assembly, part of the 50S ribosomal subunit. Forms a bridge to the 30S subunit in the 70S ribosome.

Its function is as follows. One of the primary rRNA binding proteins. Required for association of the 30S and 50S subunits to form the 70S ribosome, for tRNA binding and peptide bond formation. It has been suggested to have peptidyltransferase activity; this is somewhat controversial. Makes several contacts with the 16S rRNA in the 70S ribosome. In Dictyoglomus turgidum (strain DSM 6724 / Z-1310), this protein is Large ribosomal subunit protein uL2.